A 560-amino-acid polypeptide reads, in one-letter code: Proteasome-associated ATPase (560 aa).

Positions 1 to 19 (MSQQHDDRRPPDTADRDLA) are enriched in basic and acidic residues. A disordered region spans residues 1–21 (MSQQHDDRRPPDTADRDLARQ). The stretch at 16–55 (RDLARQATSLAEKNERLTAALTAARAQLVEMKAQLEEVSK) forms a coiled coil. Residue 237–242 (GCGKTL) participates in ATP binding. The segment at 559-560 (YL) is docks into pockets in the proteasome alpha-ring.

This sequence belongs to the AAA ATPase family. In terms of assembly, homohexamer. Assembles into a hexameric ring structure that caps the 20S proteasome core. Strongly interacts with the prokaryotic ubiquitin-like protein Pup through a hydrophobic interface; the interacting region of ARC lies in its N-terminal coiled-coil domain. There is one Pup binding site per ARC hexamer ring. Upon ATP-binding, the C-terminus of ARC interacts with the alpha-rings of the proteasome core, possibly by binding to the intersubunit pockets.

The protein operates within protein degradation; proteasomal Pup-dependent pathway. Its function is as follows. ATPase which is responsible for recognizing, binding, unfolding and translocation of pupylated proteins into the bacterial 20S proteasome core particle. May be essential for opening the gate of the 20S proteasome via an interaction with its C-terminus, thereby allowing substrate entry and access to the site of proteolysis. Thus, the C-termini of the proteasomal ATPase may function like a 'key in a lock' to induce gate opening and therefore regulate proteolysis. The chain is Proteasome-associated ATPase from Beutenbergia cavernae (strain ATCC BAA-8 / DSM 12333 / CCUG 43141 / JCM 11478 / NBRC 16432 / NCIMB 13614 / HKI 0122).